A 602-amino-acid polypeptide reads, in one-letter code: Leucine-rich repeat-containing protein 40 (602 aa).

A disordered region spans residues 1-26 (MSRHMRAPRFDPRAGFHAEGKDRGPS). Residues 8 to 24 (PRFDPRAGFHAEGKDRG) show a composition bias toward basic and acidic residues. An LRR 1 repeat occupies 35–58 (ARSSGQLNLAGRNLGEVPQCVWRI). S71 is modified (phosphoserine). 20 LRR repeats span residues 81-103 (QTDL…DLRL), 104-126 (LPAL…AIRE), 127-149 (LDNL…EITS), 150-172 (LKNL…GFEH), 174-195 (SCLE…DFAL), 196-219 (LSSL…ISRM), 221-241 (RLKH…DVGS), 242-266 (MESL…SCRQ), 268-287 (KELH…HLQH), 288-310 (LQAI…EMAL), 311-334 (LQSL…LGNL), 336-356 (LKFL…IIAK), 398-421 (IATL…LFDA), 424-447 (TTLI…IVEL), 449-470 (EMVL…ELCL), 471-494 (LQKL…MSSL), 496-517 (KLQT…LYRI), 519-540 (TLEA…KMKL), 541-564 (MENL…LGNC), and 566-587 (QLRT…ILMK).

This Mus musculus (Mouse) protein is Leucine-rich repeat-containing protein 40 (Lrrc40).